The primary structure comprises 396 residues: Adenosine 3'-phospho 5'-phosphosulfate transporter 2 (396 aa).

The interval 22–42 (NGGESAGNSPPSQRKSSTSES) is disordered. Residues 27-42 (AGNSPPSQRKSSTSES) are compositionally biased toward polar residues. Residues Ser-37 and Ser-40 each carry the phosphoserine modification. N-linked (GlcNAc...) asparagine glycosylation occurs at Asn-57. Helical transmembrane passes span 66–86 (CAGV…IFTV), 91–111 (PYGW…GLVE), 140–160 (LILA…LGYL), 163–183 (PTQV…SILI), 189–209 (GLLD…FTLA), 216–236 (NFNL…AAIG), 253–273 (VVFY…LVTG), 290–310 (FGYG…VLAL), 318–338 (IAAT…FVLF), and 342–362 (FTLQ…LNVY).

It belongs to the nucleotide-sugar transporter family. SLC35B subfamily.

The protein localises to the golgi apparatus membrane. Functionally, mediates the transport of adenosine 3'-phospho 5'-phosphosulfate (PAPS), from cytosol into Golgi. PAPS is a universal sulfuryl donor for sulfation events that take place in the Golgi. Essential for viability. Involved in glycosaminoglycan synthesis and the subsequent signaling. May be involved in hh and dpp signaling by controlling the sulfation of heparan sulfate (HS). This Drosophila melanogaster (Fruit fly) protein is Adenosine 3'-phospho 5'-phosphosulfate transporter 2 (Papst2).